The chain runs to 367 residues: Splicing factor U2AF-associated protein 2 (367 aa).

The tract at residues 36–104 (YDPNSLKMNK…SKSENSEASP (69 aa)) is disordered. Basic and acidic residues predominate over residues 61 to 78 (TEGKESSNGEDRHTKRLY). RRM domains are found at residues 112 to 193 (VYIQ…KMRV) and 268 to 329 (LLID…VVEA).

This sequence belongs to the HTATSF1 family. Interacts with the U2AF large and U2AF small subunits.

In terms of biological role, has a role in pre-mRNA splicing. The protein is Splicing factor U2AF-associated protein 2 (uap2) of Schizosaccharomyces pombe (strain 972 / ATCC 24843) (Fission yeast).